The primary structure comprises 243 residues: tRNA pseudouridine synthase A (243 aa).

The Nucleophile role is filled by aspartate 53. Residue tyrosine 111 participates in substrate binding.

The protein belongs to the tRNA pseudouridine synthase TruA family. Homodimer.

The enzyme catalyses uridine(38/39/40) in tRNA = pseudouridine(38/39/40) in tRNA. In terms of biological role, formation of pseudouridine at positions 38, 39 and 40 in the anticodon stem and loop of transfer RNAs. In Chlorobium chlorochromatii (strain CaD3), this protein is tRNA pseudouridine synthase A.